The primary structure comprises 473 residues: 6-phospho-beta-glucosidase (473 aa).

Glu-174 (proton donor) is an active-site residue. The active-site Nucleophile is Glu-366.

It belongs to the glycosyl hydrolase 1 family.

It carries out the reaction 6-phospho-beta-D-glucosyl-(1-&gt;4)-D-glucose + H2O = D-glucose 6-phosphate + D-glucose. The polypeptide is 6-phospho-beta-glucosidase (abgA) (Clostridium longisporum).